The following is a 117-amino-acid chain: Large ribosomal subunit protein bL20 (117 aa).

This sequence belongs to the bacterial ribosomal protein bL20 family.

In terms of biological role, binds directly to 23S ribosomal RNA and is necessary for the in vitro assembly process of the 50S ribosomal subunit. It is not involved in the protein synthesizing functions of that subunit. The protein is Large ribosomal subunit protein bL20 of Leptospira interrogans serogroup Icterohaemorrhagiae serovar copenhageni (strain Fiocruz L1-130).